Reading from the N-terminus, the 279-residue chain is Thymidylate synthase (279 aa).

DUMP is bound at residue Arg-133 to Arg-134. Cys-154 functions as the Nucleophile in the catalytic mechanism. DUMP contacts are provided by residues Arg-178 to Asp-181, Asn-189, and His-219 to Tyr-221. Asp-181 is a binding site for (6R)-5,10-methylene-5,6,7,8-tetrahydrofolate. A (6R)-5,10-methylene-5,6,7,8-tetrahydrofolate-binding site is contributed by Ala-278.

It belongs to the thymidylate synthase family. Bacterial-type ThyA subfamily. In terms of assembly, homodimer.

It is found in the cytoplasm. It carries out the reaction dUMP + (6R)-5,10-methylene-5,6,7,8-tetrahydrofolate = 7,8-dihydrofolate + dTMP. The protein operates within pyrimidine metabolism; dTTP biosynthesis. Catalyzes the reductive methylation of 2'-deoxyuridine-5'-monophosphate (dUMP) to 2'-deoxythymidine-5'-monophosphate (dTMP) while utilizing 5,10-methylenetetrahydrofolate (mTHF) as the methyl donor and reductant in the reaction, yielding dihydrofolate (DHF) as a by-product. This enzymatic reaction provides an intracellular de novo source of dTMP, an essential precursor for DNA biosynthesis. The sequence is that of Thymidylate synthase from Streptococcus suis (strain 05ZYH33).